Consider the following 304-residue polypeptide: Germ cell-specific gene 1-like protein (304 aa).

At 1–8 (MKTTRKCR) the chain is on the cytoplasmic side. Residues 9 to 29 (ALLSVGLNLLALLFSTTAFIT) form a helical membrane-spanning segment. At 30 to 112 (TYWCEGTQRV…FIDLAPASER (83 aa)) the chain is on the extracellular side. The chain crosses the membrane as a helical span at residues 113 to 133 (GVLWLSVVSEVLYIMLLVVGF). At 134–153 (SLMCLELFHSSNVIDGLKLN) the chain is on the cytoplasmic side. A helical transmembrane segment spans residues 154 to 174 (AFAAVFTVLSGLLGMVAHMMY). Residues 175–197 (TQVFQITVSLGPEDWRPHTWDYG) are Extracellular-facing. Residues 198–218 (WSFCMAWGSFTCCMAASVTTL) traverse the membrane as a helical segment. The Cytoplasmic segment spans residues 219–304 (NSYTKTVIEF…NTESLGEEQC (86 aa)). Over residues 266–278 (VDVYPSHGSSHGN) the composition is skewed to polar residues. The tract at residues 266 to 304 (VDVYPSHGSSHGNSRGKMRSPPAPVDQGDNTESLGEEQC) is disordered.

The protein belongs to the GSG1 family. In terms of assembly, component of the AMPAR complex.

It is found in the cell membrane. The protein resides in the synapse. Functionally, as a component of the AMPAR complex, modifies AMPA receptor (AMPAR) gating. The sequence is that of Germ cell-specific gene 1-like protein (gsg1l) from Danio rerio (Zebrafish).